The following is a 332-amino-acid chain: Nucleoid-associated protein VVA0877 (332 aa).

It belongs to the YejK family.

Its subcellular location is the cytoplasm. It is found in the nucleoid. The sequence is that of Nucleoid-associated protein VVA0877 from Vibrio vulnificus (strain YJ016).